Consider the following 153-residue polypeptide: Transcriptional repressor NrdR 3 (153 aa).

The interval 1–26 is disordered; it reads MRCPFCGHDDTQVKDSRPTEDNSAIR. A zinc finger lies at 3–34; it reads CPFCGHDDTQVKDSRPTEDNSAIRRRRSCPEC. Residues 7–24 show a composition bias toward basic and acidic residues; sequence GHDDTQVKDSRPTEDNSA. The ATP-cone domain occupies 49-139; sequence LVVIKKDGGR…VYRNFREAKD (91 aa).

It belongs to the NrdR family. It depends on Zn(2+) as a cofactor.

Its function is as follows. Negatively regulates transcription of bacterial ribonucleotide reductase nrd genes and operons by binding to NrdR-boxes. This is Transcriptional repressor NrdR 3 from Paramagnetospirillum magneticum (strain ATCC 700264 / AMB-1) (Magnetospirillum magneticum).